A 214-amino-acid chain; its full sequence is Pyridoxine/pyridoxamine 5'-phosphate oxidase (214 aa).

Residues 8–11 (RTNY) and lysine 66 each bind substrate. Residues 61 to 66 (RIVLIK), 76 to 77 (FT), arginine 82, lysine 83, and glutamine 105 contribute to the FMN site. Residues tyrosine 123, arginine 127, and serine 131 each contribute to the substrate site. Residues 140–141 (QS) and tryptophan 184 contribute to the FMN site. 190–192 (RLH) is a binding site for substrate. Arginine 194 contacts FMN.

It belongs to the pyridoxamine 5'-phosphate oxidase family. As to quaternary structure, homodimer. FMN is required as a cofactor.

The enzyme catalyses pyridoxamine 5'-phosphate + O2 + H2O = pyridoxal 5'-phosphate + H2O2 + NH4(+). The catalysed reaction is pyridoxine 5'-phosphate + O2 = pyridoxal 5'-phosphate + H2O2. Its pathway is cofactor metabolism; pyridoxal 5'-phosphate salvage; pyridoxal 5'-phosphate from pyridoxamine 5'-phosphate: step 1/1. The protein operates within cofactor metabolism; pyridoxal 5'-phosphate salvage; pyridoxal 5'-phosphate from pyridoxine 5'-phosphate: step 1/1. In terms of biological role, catalyzes the oxidation of either pyridoxine 5'-phosphate (PNP) or pyridoxamine 5'-phosphate (PMP) into pyridoxal 5'-phosphate (PLP). This is Pyridoxine/pyridoxamine 5'-phosphate oxidase from Burkholderia pseudomallei (strain 1106a).